A 338-amino-acid polypeptide reads, in one-letter code: NADPH dehydrogenase (338 aa).

Tyr-28 lines the substrate pocket. 2 residues coordinate FMN: Ala-60 and Gln-102. Residue 164–167 participates in substrate binding; the sequence is HAAH. Residues Arg-215 and 307–308 contribute to the FMN site; that span reads AR.

The protein belongs to the NADH:flavin oxidoreductase/NADH oxidase family. NamA subfamily. In terms of assembly, homotetramer. FMN is required as a cofactor.

It carries out the reaction A + NADPH + H(+) = AH2 + NADP(+). Functionally, catalyzes the reduction of the double bond of an array of alpha,beta-unsaturated aldehydes and ketones. It also reduces the nitro group of nitroester and nitroaromatic compounds. It could have a role in detoxification processes. In Bacillus velezensis (strain DSM 23117 / BGSC 10A6 / LMG 26770 / FZB42) (Bacillus amyloliquefaciens subsp. plantarum), this protein is NADPH dehydrogenase.